Reading from the N-terminus, the 154-residue chain is Myoglobin (154 aa).

The 147-residue stretch at 2–148 (VLSEGEWQLV…FRKDIAAKYK (147 aa)) folds into the Globin domain. A Phosphoserine modification is found at Ser4. His65 is a nitrite binding site. His65 contacts O2. Thr68 is modified (phosphothreonine). A heme b-binding site is contributed by His94.

This sequence belongs to the globin family. In terms of assembly, monomeric.

Its subcellular location is the cytoplasm. It localises to the sarcoplasm. It carries out the reaction Fe(III)-heme b-[protein] + nitric oxide + H2O = Fe(II)-heme b-[protein] + nitrite + 2 H(+). The enzyme catalyses H2O2 + AH2 = A + 2 H2O. In terms of biological role, monomeric heme protein which primary function is to store oxygen and facilitate its diffusion within muscle tissues. Reversibly binds oxygen through a pentacoordinated heme iron and enables its timely and efficient release as needed during periods of heightened demand. Depending on the oxidative conditions of tissues and cells, and in addition to its ability to bind oxygen, it also has a nitrite reductase activity whereby it regulates the production of bioactive nitric oxide. Under stress conditions, like hypoxia and anoxia, it also protects cells against reactive oxygen species thanks to its pseudoperoxidase activity. In Kogia breviceps (Pygmy sperm whale), this protein is Myoglobin (MB).